Consider the following 443-residue polypeptide: MTQMTPPEIVSELDKHIVGQARAKKAVAIALRNRWRRARIDEPLRSEITPKNILMIGPTGVGKTEIARRLARLANAPFIKVEATKFTEVGYVGRDVDTIIRDLVEIAIKDGRERAMRVVRDRALDAAEDRVLDVLLPPARPVGFSEPAQPQDSATRQKFRKKLREGELDDKEVEIEVASAPMQAEIFAPPGMEELTQQIQGMFQNLGNSRKKLRKLPIREALKLLADEEAARLINDEEVKTEALRAVEQNGIVFLDEVDKIAARADAHGADVSRQGVQRDLLPLVEGTTISTKYGMIKTDHILFIASGAFHLSKPSDLIPELQGRFPIRVELESLSVEDFERILTSTDACLTRQYEALLATDGVTLSFTPEGIRRLAEIAYQVNEKTENIGARRLYTVMEKLLEEVSFEAGKVGVDKLTVDAAYVDARLEVLAQREDLARYVL.

Residues V18, 60-65 (GVGKTE), D256, E321, and R393 contribute to the ATP site.

This sequence belongs to the ClpX chaperone family. HslU subfamily. A double ring-shaped homohexamer of HslV is capped on each side by a ring-shaped HslU homohexamer. The assembly of the HslU/HslV complex is dependent on binding of ATP.

It localises to the cytoplasm. ATPase subunit of a proteasome-like degradation complex; this subunit has chaperone activity. The binding of ATP and its subsequent hydrolysis by HslU are essential for unfolding of protein substrates subsequently hydrolyzed by HslV. HslU recognizes the N-terminal part of its protein substrates and unfolds these before they are guided to HslV for hydrolysis. The sequence is that of ATP-dependent protease ATPase subunit HslU from Azoarcus sp. (strain BH72).